We begin with the raw amino-acid sequence, 289 residues long: S-methyl-5'-thioadenosine phosphorylase (289 aa).

Phosphate-binding positions include S24, 66–67 (RH), and 99–100 (TA). M202 lines the substrate pocket. T203 serves as a coordination point for phosphate. Residue 226 to 228 (DYD) coordinates substrate.

This sequence belongs to the PNP/MTAP phosphorylase family. MTAP subfamily. Homotrimer.

Its subcellular location is the cytoplasm. The protein localises to the nucleus. It catalyses the reaction S-methyl-5'-thioadenosine + phosphate = 5-(methylsulfanyl)-alpha-D-ribose 1-phosphate + adenine. It participates in amino-acid biosynthesis; L-methionine biosynthesis via salvage pathway; S-methyl-5-thio-alpha-D-ribose 1-phosphate from S-methyl-5'-thioadenosine (phosphorylase route): step 1/1. Catalyzes the reversible phosphorylation of S-methyl-5'-thioadenosine (MTA) to adenine and 5-methylthioribose-1-phosphate. Involved in the breakdown of MTA, a major by-product of polyamine biosynthesis. Responsible for the first step in the methionine salvage pathway after MTA has been generated from S-adenosylmethionine. Has broad substrate specificity with 6-aminopurine nucleosides as preferred substrates. The chain is S-methyl-5'-thioadenosine phosphorylase from Drosophila pseudoobscura pseudoobscura (Fruit fly).